Reading from the N-terminus, the 183-residue chain is Dual-action ribosomal maturation protein DarP (183 aa).

This sequence belongs to the DarP family.

It is found in the cytoplasm. In terms of biological role, member of a network of 50S ribosomal subunit biogenesis factors which assembles along the 30S-50S interface, preventing incorrect 23S rRNA structures from forming. Promotes peptidyl transferase center (PTC) maturation. This chain is Dual-action ribosomal maturation protein DarP, found in Citrobacter koseri (strain ATCC BAA-895 / CDC 4225-83 / SGSC4696).